A 166-amino-acid chain; its full sequence is Regulator of ribonuclease activity A (166 aa).

The protein belongs to the RraA family. Homotrimer. Binds to both RNA-binding sites in the C-terminal region of Rne and to RhlB.

It localises to the cytoplasm. Functionally, globally modulates RNA abundance by binding to RNase E (Rne) and regulating its endonucleolytic activity. Can modulate Rne action in a substrate-dependent manner by altering the composition of the degradosome. Modulates RNA-binding and helicase activities of the degradosome. The protein is Regulator of ribonuclease activity A of Mannheimia succiniciproducens (strain KCTC 0769BP / MBEL55E).